We begin with the raw amino-acid sequence, 683 residues long: MSPHPEAITDCVTLNTVGQLAEGGYPLRFSTLFQEQQKMNISQASVSFKDVTIEFTQEEWQQMAPVQKNLYRDVMLENYSNLVSVGYCCFKPEVIFKLEQGEEPWFSEEEFSNQSHPKDYRGDDLIKQNKKIKDKHLEQAICINNKTLTTEEEKVLGKPFTLHVAAVASTKMSCKCNSWEVNLQSISEFIINNRNYSTKKIGCGNVCENSPFKINFEKTQTGEKFYEHNKNMKALNYNENLPKHPKFQTLEQAFECNKIGKAFNDKANCVKHNSSHTGETSSKDDEFRKNCDKKTLFDHRRTGTGKKHLHLNQCGKSFEKSTVEEYNKLNMGIKHYELNPSGNNFNRKAHLTDPQTAVIEENPLVSNDRTQTWVKSSEYHENKKSYQTSVHRVRRRSHSMMKPYKCNECGKSFCQKGHLIQHQRTHTGEKPFECSECGKTFSQKSHLSTHQRIHTAEKPYKCNECGKTFVQKSTLRGHQRIHTGEKPYECSECGKTFVQKSTLRDHHRIHTGEKSFQCNQCGKTFGQKSNLRIHQRTHTGEKTYQCNECEKSFWRKDHLIQHQKTHTGEKPFKCNECGKTFARTSTLRVHQRIHTGEKPFKCNECGKKFVRKAILSDHQRIHTGEKPFQCNKCGKTFGQKSNLRIHQRTHSGEKSYECNEYGKLCKKSTLSLYQKIQGEGNPY.

Residues 46–117 (VSFKDVTIEF…EEEFSNQSHP (72 aa)) enclose the KRAB domain. A C2H2-type 1; degenerate zinc finger spans residues 254–276 (FECNKIGKAFNDKANCVKHNSSH). 9 C2H2-type zinc fingers span residues 404–426 (YKCN…QRTH), 432–454 (FECS…QRIH), 460–482 (YKCN…QRIH), 488–510 (YECS…HRIH), 516–538 (FQCN…QRTH), 544–566 (YQCN…QKTH), 572–594 (FKCN…QRIH), 600–622 (FKCN…QRIH), and 628–650 (FQCN…QRTH).

Belongs to the krueppel C2H2-type zinc-finger protein family.

It localises to the nucleus. Functionally, may be involved in transcriptional regulation. The polypeptide is Zinc finger protein 510 (ZNF510) (Homo sapiens (Human)).